Here is a 219-residue protein sequence, read N- to C-terminus: ATP-dependent Clp protease proteolytic subunit (219 aa).

Ser-101 (nucleophile) is an active-site residue. The active site involves His-126.

Belongs to the peptidase S14 family. Component of the chloroplastic Clp protease core complex.

It is found in the plastid. The protein resides in the chloroplast stroma. The enzyme catalyses Hydrolysis of proteins to small peptides in the presence of ATP and magnesium. alpha-casein is the usual test substrate. In the absence of ATP, only oligopeptides shorter than five residues are hydrolyzed (such as succinyl-Leu-Tyr-|-NHMec, and Leu-Tyr-Leu-|-Tyr-Trp, in which cleavage of the -Tyr-|-Leu- and -Tyr-|-Trp bonds also occurs).. Cleaves peptides in various proteins in a process that requires ATP hydrolysis. Has a chymotrypsin-like activity. Plays a major role in the degradation of misfolded proteins. In Chara vulgaris (Common stonewort), this protein is ATP-dependent Clp protease proteolytic subunit.